Consider the following 352-residue polypeptide: Protein RecA (352 aa).

An ATP-binding site is contributed by G64–T71. A disordered region spans residues N328 to E352. Residues A335 to E352 are compositionally biased toward acidic residues.

This sequence belongs to the RecA family.

Its subcellular location is the cytoplasm. In terms of biological role, can catalyze the hydrolysis of ATP in the presence of single-stranded DNA, the ATP-dependent uptake of single-stranded DNA by duplex DNA, and the ATP-dependent hybridization of homologous single-stranded DNAs. It interacts with LexA causing its activation and leading to its autocatalytic cleavage. This chain is Protein RecA, found in Brevibacillus brevis (strain 47 / JCM 6285 / NBRC 100599).